The primary structure comprises 342 residues: tRNA N6-adenosine threonylcarbamoyltransferase (342 aa).

Positions 114 and 118 each coordinate Fe cation. Substrate is bound by residues 136-140 (LVSGG), aspartate 169, glycine 182, aspartate 186, and asparagine 275. Aspartate 301 is a binding site for Fe cation.

It belongs to the KAE1 / TsaD family. Fe(2+) is required as a cofactor.

The protein localises to the cytoplasm. The enzyme catalyses L-threonylcarbamoyladenylate + adenosine(37) in tRNA = N(6)-L-threonylcarbamoyladenosine(37) in tRNA + AMP + H(+). In terms of biological role, required for the formation of a threonylcarbamoyl group on adenosine at position 37 (t(6)A37) in tRNAs that read codons beginning with adenine. Is involved in the transfer of the threonylcarbamoyl moiety of threonylcarbamoyl-AMP (TC-AMP) to the N6 group of A37, together with TsaE and TsaB. TsaD likely plays a direct catalytic role in this reaction. The polypeptide is tRNA N6-adenosine threonylcarbamoyltransferase (Streptococcus pyogenes serotype M18 (strain MGAS8232)).